Reading from the N-terminus, the 332-residue chain is MALLCYNRGCGQRFDPETNSDDACTYHPGVPVFHDALKGWSCCKRRTTDFSDFLSIVGCTKGRHNSEKPPEPVKPEVKTTEKKELSELKPKFQEHIIQAPKPVEAIKRPSPDEPMTNLELKISASLKQALDKLKLSSGNEENKKEEDSDEIKIGTSCKNGGCSKTYQGPQSLEEVCVYHSGVPIFHEGMKYWSCCRRKTSDFNTFLAQEGCTTGKHMWTKKDAGKKVVPCRHDWHQTGGEVTISVYAKNSLPELSQVVANSTLLNVHIVFEGEKEFHQNVKLWGVIDVKRSYVTMTATKIEITMRKAEPMQWASLELPAAKTEEKQKEETTE.

Alanine 2 carries the N-acetylalanine modification. Positions 2–77 (ALLCYNRGCG…KPPEPVKPEV (76 aa)) are interaction with PPP5C. Residues cysteine 5, cysteine 10, cysteine 24, histidine 27, cysteine 42, and cysteine 43 each contribute to the Zn(2+) site. CHORD domains follow at residues 5 to 64 (CYNR…KGRH) and 157 to 216 (CKNG…TGKH). The residue at position 47 (threonine 47) is a Phosphothreonine. Serine 51 bears the Phosphoserine mark. Zn(2+) contacts are provided by cysteine 59, histidine 64, cysteine 157, cysteine 162, cysteine 176, histidine 179, cysteine 194, cysteine 195, cysteine 211, and histidine 216. Positions 62 to 82 (GRHNSEKPPEPVKPEVKTTEK) are disordered. The span at 64–82 (HNSEKPPEPVKPEVKTTEK) shows a compositional bias: basic and acidic residues. Positions 65–316 (NSEKPPEPVK…AEPMQWASLE (252 aa)) are interaction with HSP90AA1 and HSP90AB1. Residues 227–316 (VVPCRHDWHQ…AEPMQWASLE (90 aa)) enclose the CS domain.

Interacts with HSP90AA1, HSP90AB1, PPP5C, ROCK1 and ROCK2.

Its function is as follows. Regulates centrosome duplication, probably by inhibiting the kinase activity of ROCK2. Proposed to act as co-chaperone for HSP90. May play a role in the regulation of NOD1 via a HSP90 chaperone complex. In vitro, has intrinsic chaperone activity. This function may be achieved by inhibiting association of ROCK2 with NPM1. Plays a role in ensuring the localization of the tyrosine kinase receptor EGFR to the plasma membrane, and thus ensures the subsequent regulation of EGFR activity and EGF-induced actin cytoskeleton remodeling. Involved in stress response. Prevents tumorigenesis. In Bos taurus (Bovine), this protein is Cysteine and histidine-rich domain-containing protein 1 (CHORDC1).